The sequence spans 92 residues: Larval cuticle protein 9 (92 aa).

An N-terminal signal peptide occupies residues 1–16 (MKFVIVLACLLAVVFA). The Chitin-binding type R&amp;R domain occupies 31-92 (LLDFNYAYEL…TGYHPKVVEA (62 aa)).

Functionally, component of the cuticle of the larva. The chain is Larval cuticle protein 9 (Lcp9) from Drosophila melanogaster (Fruit fly).